The following is a 949-amino-acid chain: Glycine dehydrogenase (decarboxylating) (949 aa).

Position 699 is an N6-(pyridoxal phosphate)lysine (lysine 699).

The protein belongs to the GcvP family. In terms of assembly, the glycine cleavage system is composed of four proteins: P, T, L and H. It depends on pyridoxal 5'-phosphate as a cofactor.

The enzyme catalyses N(6)-[(R)-lipoyl]-L-lysyl-[glycine-cleavage complex H protein] + glycine + H(+) = N(6)-[(R)-S(8)-aminomethyldihydrolipoyl]-L-lysyl-[glycine-cleavage complex H protein] + CO2. Functionally, the glycine cleavage system catalyzes the degradation of glycine. The P protein binds the alpha-amino group of glycine through its pyridoxal phosphate cofactor; CO(2) is released and the remaining methylamine moiety is then transferred to the lipoamide cofactor of the H protein. This is Glycine dehydrogenase (decarboxylating) from Roseobacter denitrificans (strain ATCC 33942 / OCh 114) (Erythrobacter sp. (strain OCh 114)).